Here is a 159-residue protein sequence, read N- to C-terminus: Globin CTT-W (159 aa).

The signal sequence occupies residues 1 to 16 (MKFLVILTLCIAGAIA). Residues 17-159 (HCDKAPFIKA…HHAIVYSILE (143 aa)) form the Globin domain. Heme b contacts are provided by H73 and H108.

It belongs to the globin family.

This is Globin CTT-W (CTT-W) from Chironomus thummi piger (Midge).